Reading from the N-terminus, the 764-residue chain is MVSLRSRKVIPASEMVSDGKTEKDASGDSPTSVLNEEENCEEKSVTVVEEEILLAKNGDSSLISEAMAQEEEQLLKLREDEEKANNAGSAVAPNLNETQFTKLDELLTQTQLYSEFLLEKMEDITINGIESESQKAEPEKTGRGRKRKAASQYNNTKAKRAVAAMISRSKEDGETINSDLTEEETVIKLQNELCPLLTGGQLKSYQLKGVKWLISLWQNGLNGILADQMGLGKTIQTIGFLSHLKGNGLDGPYLVIAPLSTLSNWFNEIARFTPSINAIIYHGDKNQRDELRRKHMPKTVGPKFPIVITSYEVAMNDAKRILRHYPWKYVVIDEGHRLKNHKCKLLRELKHLKMDNKLLLTGTPLQNNLSELWSLLNFILPDIFTSHDEFESWFDFSEKNKNEATKEEEEKRRAQVVSKLHGILRPFILRRMKCDVELSLPRKKEIIMYATMTDHQKKFQEHLVNNTLEAHLGENAIRGQGWKGKLNNLVIQLRKNCNHPDLLQGQIDGSYLYPPVEEIVGQCGKFRLLERLLVRLFANNHKVLIFSQWTKLLDIMDYYFSEKGFEVCRIDGSVKLDERRRQIKDFSDEKSSCSIFLLSTRAGGLGINLTAADTCILYDSDWNPQMDLQAMDRCHRIGQTKPVHVYRLSTAQSIETRVLKRAYSKLKLEHVVIGQGQFHQERAKSSTPLEEEDILALLKEDETAEDKLIQTDISDADLDRLLDRSDLTITAPGETQAAEAFPVKGPGWEVVLPSSGGMLSSLNS.

The disordered stretch occupies residues 1-42 (MVSLRSRKVIPASEMVSDGKTEKDASGDSPTSVLNEEENCEE). The segment covering 17-26 (SDGKTEKDAS) has biased composition (basic and acidic residues). A coiled-coil region spans residues 62–88 (LISEAMAQEEEQLLKLREDEEKANNAG). Positions 129–152 (IESESQKAEPEKTGRGRKRKAASQ) are disordered. The span at 132–142 (ESQKAEPEKTG) shows a compositional bias: basic and acidic residues. Residues 145–152 (RKRKAASQ) carry the Nuclear localization signal 1 motif. One can recognise a Helicase ATP-binding domain in the interval 214-382 (ISLWQNGLNG…WSLLNFILPD (169 aa)). Residue 227–234 (DQMGLGKT) coordinates ATP. The DEAH box signature appears at 333-336 (DEGH). Positions 429–436 (LRRMKCDV) match the Nuclear localization signal 2 motif. The Helicase C-terminal domain occupies 528–695 (LLERLLVRLF…STPLEEEDIL (168 aa)).

The protein belongs to the SNF2/RAD54 helicase family. As to quaternary structure, interacts with the MBD domains of MBD2, MBD5 and MBD6.

The protein resides in the nucleus. The catalysed reaction is ATP + H2O = ADP + phosphate + H(+). ATPase activity is stimulated 3-fold by DNA (both free and nucleosomal) binding. In terms of biological role, ATP-dependent DNA helicase that plays a role in formation, organization, stability and heritability of heterochromatin and thus regulates several physiological traits. Binds to the nucleosome and promotes chromatin remodeling in an ATP-dependent manner; induces nucleosome repositioning on a short DNA fragment, and, possibly, could be guided to target sites (including silent transposable elements) by small interfering RNAs (siRNAs). Can bind both free and nucleosomal DNA. Required for the heritable maintenance of genome integrity and transcriptional gene silencing (TGS), including homology-dependent gene silencing (HDG silencing), via the maintenance of DNA methylation (mostly on cytosine, in both CpG and CpHpG sites, where H is A, T or C) and of histone methylation (e.g. chromatin methylation). May facilitate localization of MBD proteins at specific nuclear domains. Necessary for the maintenance of the genomic imprint at the MEA locus, especially for the silencing of paternally inherited MEA locus. Plays a major role in the inactivation maintenance of retrotransposons (e.g. Tar17, SINE, LINE, ATLN39, CAC1 (CACTAs), Athila elements, and mutator-like elements MULEs and TIR-MULEs) and the silencing of repeated genes and transgenes (e.g. T-DNA insertions). Required for KYP-dependent histone H3 'Lys-9' (H3K9me) methylation, deacetylation of histone H4 'Lys-16' (H4K16) and MET1-dependent DNA methylation. Involved in the chromatin organization of 5S rRNA genes (localized in the pericentromeric heterochromatin of chromosomes 3, 4, and 5) modifications during heterochromatin establishment. Prevents siRNA accumulation (siRNA are probably involved in epigenetic inheritance and in 5S rRNA genes regulation by silencing). Required during plant organogenesis and development, as well as during seed formation. The chain is ATP-dependent DNA helicase DDM1 (DDM1) from Arabidopsis thaliana (Mouse-ear cress).